The following is a 387-amino-acid chain: Protein adenylyltransferase VopS (387 aa).

Residues 76 to 77, 122 to 124, 353 to 355, and Arg359 contribute to the ATP site; these read IT, LDS, and GNG. The 110-residue stretch at 278-387 folds into the Fido domain; that stretch reads LNMDNLKELH…NAENSLHGIK (110 aa).

The protein localises to the secreted. It carries out the reaction L-tyrosyl-[protein] + ATP = O-(5'-adenylyl)-L-tyrosyl-[protein] + diphosphate. The enzyme catalyses L-threonyl-[protein] + ATP = 3-O-(5'-adenylyl)-L-threonyl-[protein] + diphosphate. In terms of biological role, adenylyltransferase involved in virulence by mediating the addition of adenosine 5'-monophosphate (AMP) to specific threonine residue of host Rho GTPases RhoA, Rac and Cdc42. The resulting AMPylation prevents the interaction of Rho GTPases with downstream effectors, thereby inhibiting actin assembly in infected cells. This chain is Protein adenylyltransferase VopS (vopS), found in Vibrio parahaemolyticus serotype O3:K6 (strain RIMD 2210633).